The chain runs to 2381 residues: Nipped-B-like protein A (2381 aa).

The HEAT 1 repeat unit spans residues 85 to 124 (SDELEGDVPVLLQLLMSRNPNIFRNKTAPNTPQYPAQAGI). 3 disordered regions span residues 131 to 211 (PPYK…HLQQ), 240 to 289 (HLLQ…DIVG), and 329 to 503 (LAAI…ELPP). Polar residues predominate over residues 138–158 (GSMQGSPASANYQQASMSHSP). 2 stretches are compositionally biased toward basic and acidic residues: residues 254–273 (GTKDLHLGSQDKQRGQKSSE) and 333–355 (ERMESEAAMETERSAKEVQDKDK). The span at 373–389 (GTAGSGSGAPGGGGGAN) shows a compositional bias: gly residues. The span at 451–473 (VKHEHDHDPEHPHYDDKQPDTPR) shows a compositional bias: basic and acidic residues. The PxVxL motif motif lies at 552 to 565 (KKSVKPVVVLQKLS). A compositionally biased stretch (basic and acidic residues) spans 570 to 580 (QRLMRERDSRA). Disordered regions lie at residues 570-604 (QRLMRERDSRASKSGKNRLSSGRSGKGGIDPSVLK) and 629-708 (RKRS…NEVA). The span at 581 to 592 (SKSGKNRLSSGR) shows a compositional bias: polar residues. Composition is skewed to basic and acidic residues over residues 633-642 (TVNERPKYAE) and 658-694 (KDRDRTWEAEERDRRSSGEHRRGNFDARRGSGSRYDD). 4 HEAT repeats span residues 1299–1337 (SQSFDIYLTQILRVLGESAIAVRTKAMKCLSEVVAVDPS), 1375–1413 (PQLTEQYYDMLIERILDTGISVRKRVIKILRDICLEQPN), 1477–1516 (YDWFEQLLQNLLKSEEDSSYKPTRKACVQLVDNLVEHILK), and 1843–1881 (LIHPVQCVPYLIAMGTDAEPTMRNKADQQLVEIDKKYTG). 2 disordered regions span residues 2005–2095 (IPGR…DLDD) and 2228–2271 (LLGG…GDSA). The segment covering 2006-2021 (PGRKSRKRRRRRRRPQ) has biased composition (basic residues). Positions 2040 to 2056 (EEERGAQDEERERHSGD) are enriched in basic and acidic residues. Residues 2057–2068 (EEYDDDDYEEDE) show a composition bias toward acidic residues. Positions 2077–2086 (KPTEDIRQSE) are enriched in basic and acidic residues.

Belongs to the SCC2/Nipped-B family.

The protein localises to the nucleus. Its function is as follows. May play a structural role in chromatin. Involved in sister chromatid cohesion, possibly by facilitating the cohesin complex loading. Transcription factor, which may promote cortical neuron migration during brain development by regulating the transcription of crucial genes in this process. This is Nipped-B-like protein A (nipbla) from Danio rerio (Zebrafish).